A 125-amino-acid polypeptide reads, in one-letter code: uncharacterized protein (125 aa).

The helical transmembrane segment at 10 to 26 (IIILVCLMFLAIMVYIY) threads the bilayer.

It localises to the membrane. This is an uncharacterized protein from Rickettsia prowazekii (strain Madrid E).